The sequence spans 347 residues: L-threonine 3-dehydrogenase (347 aa).

Cysteine 43 is a Zn(2+) binding site. Residues threonine 45 and histidine 48 each act as charge relay system in the active site. The Zn(2+) site is built by histidine 68, glutamate 69, cysteine 98, cysteine 101, cysteine 104, and cysteine 112. NAD(+) is bound by residues isoleucine 180, aspartate 200, arginine 205, leucine 267–leucine 269, and isoleucine 292–threonine 293.

Belongs to the zinc-containing alcohol dehydrogenase family. Homotetramer. Requires Zn(2+) as cofactor.

It is found in the cytoplasm. It catalyses the reaction L-threonine + NAD(+) = (2S)-2-amino-3-oxobutanoate + NADH + H(+). Its pathway is amino-acid degradation; L-threonine degradation via oxydo-reductase pathway; glycine from L-threonine: step 1/2. Functionally, catalyzes the NAD(+)-dependent oxidation of L-threonine to 2-amino-3-ketobutyrate. The chain is L-threonine 3-dehydrogenase from Bacillus subtilis (strain 168).